The primary structure comprises 38 residues: Large ribosomal subunit protein bL36 (38 aa).

It belongs to the bacterial ribosomal protein bL36 family.

This Prochlorococcus marinus (strain MIT 9312) protein is Large ribosomal subunit protein bL36.